Here is a 120-residue protein sequence, read N- to C-terminus: Large ribosomal subunit protein bL12 (120 aa).

It belongs to the bacterial ribosomal protein bL12 family. Homodimer. Part of the ribosomal stalk of the 50S ribosomal subunit. Forms a multimeric L10(L12)X complex, where L10 forms an elongated spine to which 2 to 4 L12 dimers bind in a sequential fashion. Binds GTP-bound translation factors.

In terms of biological role, forms part of the ribosomal stalk which helps the ribosome interact with GTP-bound translation factors. Is thus essential for accurate translation. This is Large ribosomal subunit protein bL12 from Pseudoalteromonas translucida (strain TAC 125).